Here is an 89-residue protein sequence, read N- to C-terminus: Small ribosomal subunit protein uS14A (89 aa).

A disordered region spans residues 34-54 (ESLRKLPRDSNPNRLKNRDKI).

Belongs to the universal ribosomal protein uS14 family. Part of the 30S ribosomal subunit. Contacts proteins S3 and S10.

Its function is as follows. Binds 16S rRNA, required for the assembly of 30S particles and may also be responsible for determining the conformation of the 16S rRNA at the A site. This chain is Small ribosomal subunit protein uS14A, found in Streptococcus pyogenes serotype M1.